Reading from the N-terminus, the 695-residue chain is Glycine--tRNA ligase beta subunit (695 aa).

The protein belongs to the class-II aminoacyl-tRNA synthetase family. Tetramer of two alpha and two beta subunits.

Its subcellular location is the cytoplasm. It carries out the reaction tRNA(Gly) + glycine + ATP = glycyl-tRNA(Gly) + AMP + diphosphate. The chain is Glycine--tRNA ligase beta subunit from Desulforamulus reducens (strain ATCC BAA-1160 / DSM 100696 / MI-1) (Desulfotomaculum reducens).